Consider the following 173-residue polypeptide: Putative phosphoesterase GK0864 (173 aa).

The active-site Proton donor is His34. Short sequence motifs (HXTX) lie at residues 34-37 and 115-118; these read HITL and HITI. The active-site Proton acceptor is the His115.

It belongs to the 2H phosphoesterase superfamily. YjcG family.

The polypeptide is Putative phosphoesterase GK0864 (Geobacillus kaustophilus (strain HTA426)).